The primary structure comprises 329 residues: Acetyl-coenzyme A carboxylase carboxyl transferase subunit alpha (329 aa).

Positions glutamine 40–glutamate 294 constitute a CoA carboxyltransferase C-terminal domain.

This sequence belongs to the AccA family. In terms of assembly, acetyl-CoA carboxylase is a heterohexamer composed of biotin carboxyl carrier protein (AccB), biotin carboxylase (AccC) and two subunits each of ACCase subunit alpha (AccA) and ACCase subunit beta (AccD).

Its subcellular location is the cytoplasm. It catalyses the reaction N(6)-carboxybiotinyl-L-lysyl-[protein] + acetyl-CoA = N(6)-biotinyl-L-lysyl-[protein] + malonyl-CoA. It participates in lipid metabolism; malonyl-CoA biosynthesis; malonyl-CoA from acetyl-CoA: step 1/1. Component of the acetyl coenzyme A carboxylase (ACC) complex. First, biotin carboxylase catalyzes the carboxylation of biotin on its carrier protein (BCCP) and then the CO(2) group is transferred by the carboxyltransferase to acetyl-CoA to form malonyl-CoA. This chain is Acetyl-coenzyme A carboxylase carboxyl transferase subunit alpha, found in Prochlorococcus marinus (strain MIT 9313).